We begin with the raw amino-acid sequence, 221 residues long: Ribosomal RNA small subunit methyltransferase G (221 aa).

S-adenosyl-L-methionine contacts are provided by residues Gly-85, Phe-90, 136–137 (AE), and Arg-149.

The protein belongs to the methyltransferase superfamily. RNA methyltransferase RsmG family.

The protein localises to the cytoplasm. Specifically methylates the N7 position of a guanine in 16S rRNA. The polypeptide is Ribosomal RNA small subunit methyltransferase G (Porphyromonas gingivalis (strain ATCC BAA-308 / W83)).